The sequence spans 383 residues: S-adenosylmethionine synthase (383 aa).

An ATP-binding site is contributed by H15. D17 contributes to the Mg(2+) binding site. Residue E43 participates in K(+) binding. L-methionine contacts are provided by E56 and Q99. Positions 99–109 are flexible loop; the sequence is QSPDINQGVDR. Residues 164–166, 230–231, D239, 245–246, A262, and K266 contribute to the ATP site; these read DAK, RF, and RK. D239 lines the L-methionine pocket. Residue K270 coordinates L-methionine.

This sequence belongs to the AdoMet synthase family. In terms of assembly, homotetramer; dimer of dimers. Mg(2+) serves as cofactor. The cofactor is K(+).

It localises to the cytoplasm. The catalysed reaction is L-methionine + ATP + H2O = S-adenosyl-L-methionine + phosphate + diphosphate. It participates in amino-acid biosynthesis; S-adenosyl-L-methionine biosynthesis; S-adenosyl-L-methionine from L-methionine: step 1/1. In terms of biological role, catalyzes the formation of S-adenosylmethionine (AdoMet) from methionine and ATP. The overall synthetic reaction is composed of two sequential steps, AdoMet formation and the subsequent tripolyphosphate hydrolysis which occurs prior to release of AdoMet from the enzyme. The polypeptide is S-adenosylmethionine synthase (Shewanella sp. (strain W3-18-1)).